The chain runs to 986 residues: Rho guanine nucleotide exchange factor 2 (986 aa).

The Phorbol-ester/DAG-type zinc-finger motif lies at 39–86 (GHLFTTISVSGMTMCYACNKSITAKEALICPTCNVTIHNRCKDTLANC). A phosphoserine mark is found at Ser-109, Ser-122, Ser-129, Ser-133, and Ser-137. An interaction with DYNLT1 region spans residues 131–161 (RQSLLGSRRGRSSLSLAKSVSTTNIAGHFND). Residue Ser-143 is modified to Phosphoserine; by PAK4. Residues Ser-151, Ser-163, Ser-172, Ser-174, and Ser-177 each carry the phosphoserine modification. One can recognise a DH domain in the interval 235–432 (KQQDVIYELI…KELLSNVDEG (198 aa)). Lys-353 bears the N6-acetyllysine mark. Residues 472 to 571 (KLIHDGCLLW…WIRVIQQSVR (100 aa)) form the PH domain. Positions 587 to 611 (EAYLRRIKMELQQKDRALVELLREK) form a coiled coil. Phosphoserine is present on residues Ser-645 and Ser-648. Thr-679 carries the post-translational modification Phosphothreonine; by MAPK1 or MAPK3. A disordered region spans residues 683–705 (PALPLEPDSGGNTSPGVTANGEA). Residues Ser-691, Ser-696, Ser-711, and Ser-782 each carry the phosphoserine modification. Residues 798 to 867 (EKQATELALL…RQLAALGQTE (70 aa)) are a coiled coil. Residues 862 to 986 (ALGQTEPLPA…RDGEAVASES (125 aa)) are disordered. The residue at position 886 (Ser-886) is a Phosphoserine; by PAK1 and AURKA. Tyr-894 carries the phosphotyrosine modification. Ser-896 carries the phosphoserine; by PAK4 modification. Residues 920–939 (RNFEDRERQELGSPEERLQD) show a composition bias toward basic and acidic residues. Ser-932, Ser-940, and Ser-941 each carry phosphoserine. Residues 941-950 (SDPDTGSEEE) show a composition bias toward acidic residues. A Phosphothreonine modification is found at Thr-945. A phosphoserine mark is found at Ser-947, Ser-952, Ser-953, Ser-956, and Ser-960.

As to quaternary structure, found in a complex composed at least of ARHGEF2, NOD2 and RIPK2. Interacts with RIPK2; the interaction mediates tyrosine phosphorylation of RIPK2 by Src kinase CSK. Interacts with RIPK1 and RIPK3. Interacts with YWHAZ/14-3-3 zeta; when phosphorylated at Ser-886. Interacts with the kinases PAK4, AURKA and MAPK1. Interacts with RHOA and RAC1. Interacts with NOD1. Interacts (via the N-terminal zinc finger) with CAPN6 (via domain II). Interacts with DYNLT1. Phosphorylation of Ser-886 by PAK1 induces binding to protein YWHAZ, promoting its relocation to microtubules and the inhibition of its activity. Phosphorylated by AURKA and CDK1 during mitosis, which negatively regulates its activity. Phosphorylation by MAPK1 or MAPK3 increases nucleotide exchange activity. Phosphorylation by PAK4 releases GEF-H1 from the microtubules. Phosphorylated on serine, threonine and tyrosine residues in a RIPK2-dependent manner.

It is found in the cytoplasm. The protein resides in the cytoskeleton. Its subcellular location is the cell junction. It localises to the tight junction. The protein localises to the golgi apparatus. It is found in the spindle. The protein resides in the cell projection. Its subcellular location is the ruffle membrane. It localises to the cytoplasmic vesicle. In terms of biological role, activates Rho-GTPases by promoting the exchange of GDP for GTP. May be involved in epithelial barrier permeability, cell motility and polarization, dendritic spine morphology, antigen presentation, leukemic cell differentiation, cell cycle regulation, innate immune response, and cancer. Binds Rac-GTPases, but does not seem to promote nucleotide exchange activity toward Rac-GTPases, which was uniquely reported in PubMed:9857026. May stimulate instead the cortical activity of Rac. Inactive toward CDC42, TC10, or Ras-GTPases. Forms an intracellular sensing system along with NOD1 for the detection of microbial effectors during cell invasion by pathogens. Required for RHOA and RIP2 dependent NF-kappaB signaling pathways activation upon S.flexneri cell invasion. Involved not only in sensing peptidoglycan (PGN)-derived muropeptides through NOD1 that is independent of its GEF activity, but also in the activation of NF-kappaB by Shigella effector proteins (IpgB2 and OspB) which requires its GEF activity and the activation of RhoA. Involved in innate immune signaling transduction pathway promoting cytokine IL6/interleukin-6 and TNF-alpha secretion in macrophage upon stimulation by bacterial peptidoglycans; acts as a signaling intermediate between NOD2 receptor and RIPK2 kinase. Contributes to the tyrosine phosphorylation of RIPK2 through Src tyrosine kinase leading to NF-kappaB activation by NOD2. Overexpression activates Rho-, but not Rac-GTPases, and increases paracellular permeability. Involved in neuronal progenitor cell division and differentiation. Involved in the migration of precerebellar neurons. The protein is Rho guanine nucleotide exchange factor 2 (ARHGEF2) of Homo sapiens (Human).